Here is a 334-residue protein sequence, read N- to C-terminus: Ferrochelatase (334 aa).

Residues H207 and E288 each coordinate Fe cation.

Belongs to the ferrochelatase family.

It is found in the cytoplasm. It carries out the reaction heme b + 2 H(+) = protoporphyrin IX + Fe(2+). Its pathway is porphyrin-containing compound metabolism; protoheme biosynthesis; protoheme from protoporphyrin-IX: step 1/1. Catalyzes the ferrous insertion into protoporphyrin IX. The sequence is that of Ferrochelatase from Helicobacter pylori (strain ATCC 700392 / 26695) (Campylobacter pylori).